The following is a 435-amino-acid chain: Xylose isomerase (435 aa).

Aspartate 306 and aspartate 308 together coordinate Mg(2+).

The protein belongs to the xylose isomerase family. In terms of assembly, homotetramer. Mg(2+) serves as cofactor.

The protein resides in the cytoplasm. The enzyme catalyses alpha-D-xylose = alpha-D-xylulofuranose. This chain is Xylose isomerase, found in Allorhizobium ampelinum (strain ATCC BAA-846 / DSM 112012 / S4) (Agrobacterium vitis (strain S4)).